Reading from the N-terminus, the 118-residue chain is Small ribosomal subunit protein uS13 (118 aa).

The segment at 94–118 (SLPLRGQRTKTNARTRKGPRKPIKR) is disordered.

Belongs to the universal ribosomal protein uS13 family. As to quaternary structure, part of the 30S ribosomal subunit. Forms a loose heterodimer with protein S19. Forms two bridges to the 50S subunit in the 70S ribosome.

Located at the top of the head of the 30S subunit, it contacts several helices of the 16S rRNA. In the 70S ribosome it contacts the 23S rRNA (bridge B1a) and protein L5 of the 50S subunit (bridge B1b), connecting the 2 subunits; these bridges are implicated in subunit movement. Contacts the tRNAs in the A and P-sites. The protein is Small ribosomal subunit protein uS13 of Pseudoalteromonas translucida (strain TAC 125).